The following is a 197-amino-acid chain: Probable chorismate pyruvate-lyase 2 (197 aa).

Basic and acidic residues predominate over residues 1 to 14 (MRFDAADAHWRETP). Positions 1–23 (MRFDAADAHWRETPRPGASSAQK) are disordered. Arg-73, Leu-111, and Glu-173 together coordinate substrate.

Belongs to the UbiC family.

It localises to the cytoplasm. The enzyme catalyses chorismate = 4-hydroxybenzoate + pyruvate. It functions in the pathway cofactor biosynthesis; ubiquinone biosynthesis. In terms of biological role, removes the pyruvyl group from chorismate, with concomitant aromatization of the ring, to provide 4-hydroxybenzoate (4HB) for the ubiquinone pathway. This chain is Probable chorismate pyruvate-lyase 2, found in Burkholderia pseudomallei (strain 1710b).